A 293-amino-acid chain; its full sequence is Ribosomal protein L11 methyltransferase (293 aa).

Positions 145, 166, 188, and 230 each coordinate S-adenosyl-L-methionine.

The protein belongs to the methyltransferase superfamily. PrmA family.

The protein localises to the cytoplasm. It carries out the reaction L-lysyl-[protein] + 3 S-adenosyl-L-methionine = N(6),N(6),N(6)-trimethyl-L-lysyl-[protein] + 3 S-adenosyl-L-homocysteine + 3 H(+). Functionally, methylates ribosomal protein L11. The sequence is that of Ribosomal protein L11 methyltransferase from Shewanella woodyi (strain ATCC 51908 / MS32).